We begin with the raw amino-acid sequence, 339 residues long: Anthranilate phosphoribosyltransferase (339 aa).

5-phospho-alpha-D-ribose 1-diphosphate-binding positions include Gly80, 83–84 (GD), Thr88, 90–93 (NIST), 108–116 (KHGNRSVSS), and Ser120. Residue Gly80 participates in anthranilate binding. Ser92 contributes to the Mg(2+) binding site. Asn111 contacts anthranilate. Arg166 lines the anthranilate pocket. Residues Asp225 and Glu226 each coordinate Mg(2+).

The protein belongs to the anthranilate phosphoribosyltransferase family. As to quaternary structure, homodimer. The cofactor is Mg(2+).

It carries out the reaction N-(5-phospho-beta-D-ribosyl)anthranilate + diphosphate = 5-phospho-alpha-D-ribose 1-diphosphate + anthranilate. It functions in the pathway amino-acid biosynthesis; L-tryptophan biosynthesis; L-tryptophan from chorismate: step 2/5. Its function is as follows. Catalyzes the transfer of the phosphoribosyl group of 5-phosphorylribose-1-pyrophosphate (PRPP) to anthranilate to yield N-(5'-phosphoribosyl)-anthranilate (PRA). The sequence is that of Anthranilate phosphoribosyltransferase from Moorella thermoacetica (strain ATCC 39073 / JCM 9320).